The chain runs to 192 residues: A-type ATP synthase subunit E (192 aa).

It belongs to the V-ATPase E subunit family. As to quaternary structure, has multiple subunits with at least A(3), B(3), C, D, E, F, H, I and proteolipid K(x).

Its subcellular location is the cell membrane. Its function is as follows. Component of the A-type ATP synthase that produces ATP from ADP in the presence of a proton gradient across the membrane. This is A-type ATP synthase subunit E from Methanoculleus marisnigri (strain ATCC 35101 / DSM 1498 / JR1).